The sequence spans 415 residues: Sphingomyelin synthase-related protein 1 (415 aa).

One can recognise an SAM domain in the interval 12-78 (WTTKHVAVWL…MLSVRKLQKI (67 aa)). The next 4 helical transmembrane spans lie at 153–173 (ILSC…MVIV), 201–221 (FAMT…VLLL), 232–252 (LCSL…VTSL), and 277–297 (FAIW…GDYM). Histidine 301 is a catalytic residue. A helical membrane pass occupies residues 322–342 (FLHTLSWVLNLFGIFFILAAH). Catalysis depends on residues histidine 344 and aspartate 348. The helical transmembrane segment at 347 to 367 (IDVFIAFYITTRLFLYYHTLA) threads the bilayer. Topologically, residues 368–415 (NTRAYQQSRRARIWFPMFSFFECNVNGTVPNEYCWPFSKPAIMKRLIG) are cytoplasmic.

This sequence belongs to the sphingomyelin synthase family.

The protein resides in the endoplasmic reticulum membrane. It carries out the reaction an N-acylsphing-4-enine + a 1,2-diacyl-sn-glycero-3-phosphoethanolamine = an N-acylsphing-4-enine 1-phosphoethanolamine + a 1,2-diacyl-sn-glycerol. It catalyses the reaction an N-acylsphinganine + a 1,2-diacyl-sn-glycero-3-phosphoethanolamine = an N-acylsphinganine-1-phosphoethanolamine + a 1,2-diacyl-sn-glycerol. The catalysed reaction is an N-acyl-(4R)-4-hydroxysphinganine + a 1,2-diacyl-sn-glycero-3-phosphoethanolamine = an N-acyl-(4R)-4-hydroxysphinganine-1-phosphoethanolamine + a 1,2-diacyl-sn-glycerol. The enzyme catalyses N-hexadecanoylsphinganine + a 1,2-diacyl-sn-glycero-3-phosphoethanolamine = N-hexadecanoyl-sphinganine-1-phosphoethanolamine + a 1,2-diacyl-sn-glycerol. It carries out the reaction N-hexadecanoyl-(4R)-hydroxysphinganine + a 1,2-diacyl-sn-glycero-3-phosphoethanolamine = N-hexadecanoyl-(4R)-hydroxysphinganine-1-phosphoethanolamine + a 1,2-diacyl-sn-glycerol. Its pathway is sphingolipid metabolism. Synthesizes sphingolipids through transfer of a phosphatidyl head group from a glycerophospholipid on to the primary hydroxyl of a ceramide in the lumen of the endoplasmic reticulum. Catalyzes the synthesis of ceramide phosphoethanolamines (CPEs) (such as N-acylsphing-4-enine 1-phosphoethanolamine) by transferring phosphoethanolamine head group, which is smaller and more hydrophilic than the phosphocholine (PC) headgroup transferred in the canonical sphingomyelin synthesis (SMS) reaction by SMS1 or SMS2, from a phosphatidylethanolamine (1,2-diacyl-sn-glycero-3-phosphoethanolamine, PE) to a ceramide (such as N-acylsphing-4-enine). The larger PC prevents an efficient fit in the enzyme's catalytic pocket, leading to little or no SMS activity. In vitro, in the absence of ceramide, it has PLC activity with preference for phosphatidylinositol and phosphatidic acid, but also hydrolyzes phosphatidylethanolamine. The protein is Sphingomyelin synthase-related protein 1 of Homo sapiens (Human).